The following is a 490-amino-acid chain: Glutamyl-tRNA(Gln) amidotransferase subunit A (490 aa).

Active-site charge relay system residues include Lys78 and Ser159. Ser183 acts as the Acyl-ester intermediate in catalysis.

Belongs to the amidase family. GatA subfamily. Heterotrimer of A, B and C subunits.

It catalyses the reaction L-glutamyl-tRNA(Gln) + L-glutamine + ATP + H2O = L-glutaminyl-tRNA(Gln) + L-glutamate + ADP + phosphate + H(+). In terms of biological role, allows the formation of correctly charged Gln-tRNA(Gln) through the transamidation of misacylated Glu-tRNA(Gln) in organisms which lack glutaminyl-tRNA synthetase. The reaction takes place in the presence of glutamine and ATP through an activated gamma-phospho-Glu-tRNA(Gln). This Paramagnetospirillum magneticum (strain ATCC 700264 / AMB-1) (Magnetospirillum magneticum) protein is Glutamyl-tRNA(Gln) amidotransferase subunit A.